A 1888-amino-acid polypeptide reads, in one-letter code: Eukaryotic translation initiation factor 4G (1888 aa).

10 disordered regions span residues Met-1 to Pro-259, Phe-391 to Leu-420, Pro-449 to His-662, Val-726 to Glu-761, Ala-838 to Val-903, Ala-961 to Arg-1042, Thr-1083 to Leu-1138, Gly-1331 to Glu-1356, Lys-1462 to Leu-1605, and Arg-1639 to Pro-1691. Polar residues-rich tracts occupy residues Gly-13–His-36 and Val-75–Pro-84. Positions Asp-171 to Phe-183 are enriched in basic and acidic residues. A compositionally biased stretch (pro residues) spans Pro-185–Pro-195. Polar residues-rich tracts occupy residues Asn-211 to Asp-231, Ala-244 to Pro-259, Asn-393 to Ser-405, and Asn-458 to Val-475. Positions Pro-497–His-506 are enriched in basic and acidic residues. The span at Ile-586–Phe-596 shows a compositional bias: polar residues. Residues Val-603 to His-630 are compositionally biased toward low complexity. A compositionally biased stretch (basic and acidic residues) spans Ser-631–Lys-645. Low complexity predominate over residues Val-840 to Val-850. Residues Asn-869–Pro-885 show a composition bias toward polar residues. Residues Lys-963–Ser-983 show a composition bias toward basic and acidic residues. The EIF4E-binding stretch occupies residues Lys-1048 to Pro-1093. Basic and acidic residues predominate over residues Arg-1109–Ser-1124. In terms of domain architecture, MIF4G spans Gln-1239–Lys-1462. 2 stretches are compositionally biased toward basic and acidic residues: residues Arg-1467–Gln-1484 and Lys-1661–Arg-1674. An MI domain is found at Arg-1700–Cys-1824.

The protein belongs to the eukaryotic initiation factor 4G family. EIF4F is a multi-subunit complex, the composition of which varies with external and internal environmental conditions. It is composed of at least EIF4A, EIF4E and EIF4G. Interacts directly with eIF4E. In higher plants two isoforms of EIF4F have been identified, named isoform EIF4F and isoform EIF(iso)4F. Isoform EIF4F has subunits p220 and p26, whereas isoform EIF(iso)4F has subunits p82 and p28.

Its function is as follows. Component of the protein complex eIF4F, which is involved in the recognition of the mRNA cap, ATP-dependent unwinding of 5'-terminal secondary structure and recruitment of mRNA to the ribosome. The protein is Eukaryotic translation initiation factor 4G of Cucumis melo (Muskmelon).